The sequence spans 62 residues: Sperm protamine P1 (62 aa).

Residues 1–62 (MARCRRHSRS…RYSRRGRRRY (62 aa)) form a disordered region.

It belongs to the protamine P1 family. As to expression, testis.

The protein localises to the nucleus. Its subcellular location is the chromosome. Functionally, protamines substitute for histones in the chromatin of sperm during the haploid phase of spermatogenesis. They compact sperm DNA into a highly condensed, stable and inactive complex. This Planigale maculata sinualis (Common planigale) protein is Sperm protamine P1 (PRM1).